The primary structure comprises 292 residues: Poly(U)-specific endoribonuclease-B (292 aa).

An EndoU domain is found at 8–285 (VNHELSKLFN…IGTAYPALLS (278 aa)). Catalysis depends on residues His-162, His-178, and Lys-224.

Belongs to the ENDOU family. Monomer. The cofactor is Mn(2+).

Its subcellular location is the nucleus. The catalysed reaction is uridylyl-uridylyl-ribonucleotide-RNA = a 3'-end uridylyl-2',3'-cyclophospho-uridine-RNA + a 5'-end dephospho-ribonucleoside-RNA. Poly(U)-specific endoribonuclease involved in the processing of intron-encoded box C/D snoRNAs, such as U16 and U86. Releases products that have 2',3'-cyclic phosphate termini at the 3'-end. This is Poly(U)-specific endoribonuclease-B (endou-b) from Xenopus laevis (African clawed frog).